The sequence spans 126 residues: Acidic phospholipase A2 4 (126 aa).

S1 is a signal peptide. Residues 2–7 (NRPMPL) constitute a propeptide that is removed on maturation. Cystine bridges form between C18-C78, C33-C125, C35-C51, C50-C106, C57-C99, C67-C92, and C85-C97. Ca(2+) contacts are provided by Y34, G36, and G38. H54 is a catalytic residue. Residue D55 coordinates Ca(2+). The active site involves D100.

This sequence belongs to the phospholipase A2 family. Group I subfamily. D49 sub-subfamily. As to quaternary structure, monomer. Ca(2+) is required as a cofactor. Expressed by the venom gland.

It localises to the secreted. The enzyme catalyses a 1,2-diacyl-sn-glycero-3-phosphocholine + H2O = a 1-acyl-sn-glycero-3-phosphocholine + a fatty acid + H(+). In terms of biological role, snake venom phospholipase A2 (PLA2) that exhibits strong anticoagulant activity, which is not due to the catalytic activity. PLA2 catalyzes the calcium-dependent hydrolysis of the 2-acyl groups in 3-sn-phosphoglycerides. This chain is Acidic phospholipase A2 4, found in Naja sagittifera (Andaman cobra).